The following is a 328-amino-acid chain: DNA polymerase III subunit delta' (328 aa).

As to quaternary structure, DNA polymerase III contains a core (composed of alpha, epsilon and theta chains) that associates with a tau subunit. This core dimerizes to form the POLIII' complex. PolIII' associates with the gamma complex (composed of gamma, delta, delta', psi and chi chains) and with the beta chain to form the complete DNA polymerase III complex.

The catalysed reaction is DNA(n) + a 2'-deoxyribonucleoside 5'-triphosphate = DNA(n+1) + diphosphate. Its function is as follows. DNA polymerase III is a complex, multichain enzyme responsible for most of the replicative synthesis in bacteria. This DNA polymerase also exhibits 3' to 5' exonuclease activity. The polypeptide is DNA polymerase III subunit delta' (holB) (Buchnera aphidicola subsp. Schizaphis graminum (strain Sg)).